We begin with the raw amino-acid sequence, 218 residues long: Methylthioribulose-1-phosphate dehydratase (218 aa).

Residues histidine 107 and histidine 109 each contribute to the Zn(2+) site.

Belongs to the aldolase class II family. MtnB subfamily. It depends on Zn(2+) as a cofactor.

The enzyme catalyses 5-(methylsulfanyl)-D-ribulose 1-phosphate = 5-methylsulfanyl-2,3-dioxopentyl phosphate + H2O. Its pathway is amino-acid biosynthesis; L-methionine biosynthesis via salvage pathway; L-methionine from S-methyl-5-thio-alpha-D-ribose 1-phosphate: step 2/6. In terms of biological role, catalyzes the dehydration of methylthioribulose-1-phosphate (MTRu-1-P) into 2,3-diketo-5-methylthiopentyl-1-phosphate (DK-MTP-1-P). The sequence is that of Methylthioribulose-1-phosphate dehydratase from Xylella fastidiosa (strain 9a5c).